The chain runs to 294 residues: Elongation factor Ts, mitochondrial 2 (294 aa).

This sequence belongs to the EF-Ts family.

The protein localises to the mitochondrion. In terms of biological role, associates with the EF-Tu.GDP complex and induces the exchange of GDP to GTP. It remains bound to the aminoacyl-tRNA.EF-Tu.GTP complex up to the GTP hydrolysis stage on the ribosome. This is Elongation factor Ts, mitochondrial 2 from Paramecium tetraurelia.